Here is a 485-residue protein sequence, read N- to C-terminus: Cobyric acid synthase (485 aa).

The GATase cobBQ-type domain maps to 250–448; it reads TQTVAVIAYP…LHGMFEDPRV (199 aa). Cys-334 acts as the Nucleophile in catalysis. His-440 is an active-site residue.

The protein belongs to the CobB/CobQ family. CobQ subfamily.

It functions in the pathway cofactor biosynthesis; adenosylcobalamin biosynthesis. Functionally, catalyzes amidations at positions B, D, E, and G on adenosylcobyrinic A,C-diamide. NH(2) groups are provided by glutamine, and one molecule of ATP is hydrogenolyzed for each amidation. This Polaromonas naphthalenivorans (strain CJ2) protein is Cobyric acid synthase.